The following is a 714-amino-acid chain: Fatty acid oxidation complex subunit alpha (714 aa).

The enoyl-CoA hydratase stretch occupies residues 1–190; sequence MEMASAFTLN…KLGLVDDVVP (190 aa). Residues 306–714 are 3-hydroxyacyl-CoA dehydrogenase; that stretch reads APLNSVGILG…FWKTTATDLQ (409 aa).

The protein in the N-terminal section; belongs to the enoyl-CoA hydratase/isomerase family. In the central section; belongs to the 3-hydroxyacyl-CoA dehydrogenase family. As to quaternary structure, heterotetramer of two alpha chains (FadJ) and two beta chains (FadI).

Its subcellular location is the cytoplasm. It catalyses the reaction a (3S)-3-hydroxyacyl-CoA = a (2E)-enoyl-CoA + H2O. The catalysed reaction is a 4-saturated-(3S)-3-hydroxyacyl-CoA = a (3E)-enoyl-CoA + H2O. It carries out the reaction a (3S)-3-hydroxyacyl-CoA + NAD(+) = a 3-oxoacyl-CoA + NADH + H(+). The enzyme catalyses (3S)-3-hydroxybutanoyl-CoA = (3R)-3-hydroxybutanoyl-CoA. The protein operates within lipid metabolism; fatty acid beta-oxidation. In terms of biological role, catalyzes the formation of a hydroxyacyl-CoA by addition of water on enoyl-CoA. Also exhibits 3-hydroxyacyl-CoA epimerase and 3-hydroxyacyl-CoA dehydrogenase activities. In Escherichia coli (strain SMS-3-5 / SECEC), this protein is Fatty acid oxidation complex subunit alpha.